Here is a 283-residue protein sequence, read N- to C-terminus: Pantothenate synthetase (283 aa).

Residue 31 to 38 participates in ATP binding; sequence MGALHDGH. The Proton donor role is filled by His-38. Position 62 (Gln-62) interacts with (R)-pantoate. Gln-62 serves as a coordination point for beta-alanine. 148 to 151 contributes to the ATP binding site; it reads GKKD. (R)-pantoate is bound at residue Gln-154. Residues Val-177 and 185 to 188 each bind ATP; that span reads KSSR.

This sequence belongs to the pantothenate synthetase family. As to quaternary structure, homodimer.

The protein localises to the cytoplasm. It carries out the reaction (R)-pantoate + beta-alanine + ATP = (R)-pantothenate + AMP + diphosphate + H(+). Its pathway is cofactor biosynthesis; (R)-pantothenate biosynthesis; (R)-pantothenate from (R)-pantoate and beta-alanine: step 1/1. Functionally, catalyzes the condensation of pantoate with beta-alanine in an ATP-dependent reaction via a pantoyl-adenylate intermediate. This is Pantothenate synthetase from Staphylococcus aureus (strain MSSA476).